Consider the following 148-residue polypeptide: uncharacterized protein (148 aa).

Positions 38–99 are disordered; sequence QFRRHHHAEH…RRHLRKGHLK (62 aa). Positions 64–82 are enriched in basic and acidic residues; it reads FHHDGGRHGHATRIHENNR. Residues 83–99 show a composition bias toward basic residues; sequence RPHKRNRRRHLRKGHLK.

This is an uncharacterized protein from Fowl adenovirus A serotype 1 (strain CELO / Phelps) (FAdV-1).